The primary structure comprises 671 residues: DNA ligase (671 aa).

NAD(+) contacts are provided by residues 32–36 (DAEYD), 81–82 (SL), and glutamate 113. Lysine 115 functions as the N6-AMP-lysine intermediate in the catalytic mechanism. NAD(+) is bound by residues arginine 136, glutamate 173, lysine 290, and lysine 314. 4 residues coordinate Zn(2+): cysteine 408, cysteine 411, cysteine 426, and cysteine 432. The BRCT domain maps to 593-671 (EIDSPFAGKT…EAEMIRLLGA (79 aa)).

Belongs to the NAD-dependent DNA ligase family. LigA subfamily. Mg(2+) is required as a cofactor. It depends on Mn(2+) as a cofactor.

It carries out the reaction NAD(+) + (deoxyribonucleotide)n-3'-hydroxyl + 5'-phospho-(deoxyribonucleotide)m = (deoxyribonucleotide)n+m + AMP + beta-nicotinamide D-nucleotide.. Functionally, DNA ligase that catalyzes the formation of phosphodiester linkages between 5'-phosphoryl and 3'-hydroxyl groups in double-stranded DNA using NAD as a coenzyme and as the energy source for the reaction. It is essential for DNA replication and repair of damaged DNA. This chain is DNA ligase, found in Salmonella choleraesuis (strain SC-B67).